Consider the following 146-residue polypeptide: U1 small nuclear ribonucleoprotein C (146 aa).

The Matrin-type zinc-finger motif lies at 4–36; the sequence is YYCDYCDTYLTHDSPSVRKTHCTGRKHRDNVKF. Residues 64 to 96 are disordered; the sequence is NNPFAGGPSSAPPKPSGVSIPPPNMGAPPRPGM. A compositionally biased stretch (pro residues) spans 73-96; that stretch reads SAPPKPSGVSIPPPNMGAPPRPGM.

It belongs to the U1 small nuclear ribonucleoprotein C family. In terms of assembly, U1 snRNP is composed of the 7 core Sm proteins B/B', D1, D2, D3, E, F and G that assemble in a heptameric protein ring on the Sm site of the small nuclear RNA to form the core snRNP, and at least 3 U1 snRNP-specific proteins U1-70K, U1-A and U1-C. U1-C interacts with U1 snRNA and the 5' splice-site region of the pre-mRNA.

The protein resides in the nucleus. In terms of biological role, component of the spliceosomal U1 snRNP, which is essential for recognition of the pre-mRNA 5' splice-site and the subsequent assembly of the spliceosome. U1-C is directly involved in initial 5' splice-site recognition for both constitutive and regulated alternative splicing. The interaction with the 5' splice-site seems to precede base-pairing between the pre-mRNA and the U1 snRNA. Stimulates commitment or early (E) complex formation by stabilizing the base pairing of the 5' end of the U1 snRNA and the 5' splice-site region. The polypeptide is U1 small nuclear ribonucleoprotein C (Drosophila pseudoobscura pseudoobscura (Fruit fly)).